The chain runs to 270 residues: Aliphatic sulfonates import ATP-binding protein SsuB 1 (270 aa).

Positions 18 to 232 (VQLRNVVRQF…DSGQAGFQLI (215 aa)) constitute an ABC transporter domain. 50-57 (GASGSGKT) lines the ATP pocket. The disordered stretch occupies residues 247-270 (PDTAPQASAPDSTFSELRRVASAR). Residues 251 to 261 (PQASAPDSTFS) show a composition bias toward polar residues.

Belongs to the ABC transporter superfamily. Aliphatic sulfonates importer (TC 3.A.1.17.2) family. The complex is composed of two ATP-binding proteins (SsuB), two transmembrane proteins (SsuC) and a solute-binding protein (SsuA).

It localises to the cell inner membrane. It catalyses the reaction ATP + H2O + aliphatic sulfonate-[sulfonate-binding protein]Side 1 = ADP + phosphate + aliphatic sulfonateSide 2 + [sulfonate-binding protein]Side 1.. In terms of biological role, part of the ABC transporter complex SsuABC involved in aliphatic sulfonates import. Responsible for energy coupling to the transport system. This is Aliphatic sulfonates import ATP-binding protein SsuB 1 from Pseudomonas syringae pv. tomato (strain ATCC BAA-871 / DC3000).